A 424-amino-acid polypeptide reads, in one-letter code: MASSNLIKQLQERGLVAQVTDEEALAERLAQGPIALYCGFDPTADSLHLGHLVPLLCLKRFQLAGHKPVALVGGATGLIGDPSFKAAERKLNTTETVNEWVDKIRKQVSPFLDFDCGSNSAIAANNYDWFGGMNVLTFLRDIGKHFSVNQMINKEAVKQRLNRDDSGISFTEFSYNLLQGFDFSELYNRHQVELQIGGSDQWGNITSGIDLTRRMHQQQVFGLTVPLITKADGTKFGKTEGGAVWLAPEKTSPYKFYQFWINTADADVYRFLKFFTFMDLAEINALEEEDKNSGKAPRAQYVLAEEVTGMVHGAEGLAAAKRITQSLFSGALHEMTEADFAQLAQDGMPTIKLDGDADLQQALVNAELVPSRGQARTMIGSNAVTINGEKQSNAEYNFSDADRLFGRYTLLRRGKKHYCLVDWQ.

Tyr-37 contributes to the L-tyrosine binding site. The short motif at Pro-42 to His-51 is the 'HIGH' region element. Tyr-175 and Gln-179 together coordinate L-tyrosine. The 'KMSKS' region motif lies at Lys-235–Thr-239. Lys-238 serves as a coordination point for ATP. The 58-residue stretch at Ala-357–Gly-414 folds into the S4 RNA-binding domain.

The protein belongs to the class-I aminoacyl-tRNA synthetase family. TyrS type 1 subfamily. Homodimer.

The protein localises to the cytoplasm. It catalyses the reaction tRNA(Tyr) + L-tyrosine + ATP = L-tyrosyl-tRNA(Tyr) + AMP + diphosphate + H(+). Its function is as follows. Catalyzes the attachment of tyrosine to tRNA(Tyr) in a two-step reaction: tyrosine is first activated by ATP to form Tyr-AMP and then transferred to the acceptor end of tRNA(Tyr). The protein is Tyrosine--tRNA ligase of Serratia proteamaculans (strain 568).